The chain runs to 278 residues: 4-deoxy-L-threo-5-hexosulose-uronate ketol-isomerase (278 aa).

Residues His196, His198, Glu203, and His245 each coordinate Zn(2+).

It belongs to the KduI family. Requires Zn(2+) as cofactor.

The catalysed reaction is 5-dehydro-4-deoxy-D-glucuronate = 3-deoxy-D-glycero-2,5-hexodiulosonate. Its pathway is glycan metabolism; pectin degradation; 2-dehydro-3-deoxy-D-gluconate from pectin: step 4/5. Catalyzes the isomerization of 5-dehydro-4-deoxy-D-glucuronate to 3-deoxy-D-glycero-2,5-hexodiulosonate. The chain is 4-deoxy-L-threo-5-hexosulose-uronate ketol-isomerase from Salmonella agona (strain SL483).